The following is a 197-amino-acid chain: RNA pyrophosphohydrolase (197 aa).

Positions 6–149 (GYRPNVGIVI…KRDVYRRAMK (144 aa)) constitute a Nudix hydrolase domain. The Nudix box motif lies at 38–59 (GGINEGETPEQAMFRELFEEVG). The segment at 170–197 (ETKKAETGKKQPYYHKYAPQNKKGRKRR) is disordered.

It belongs to the Nudix hydrolase family. RppH subfamily. It depends on a divalent metal cation as a cofactor.

In terms of biological role, accelerates the degradation of transcripts by removing pyrophosphate from the 5'-end of triphosphorylated RNA, leading to a more labile monophosphorylated state that can stimulate subsequent ribonuclease cleavage. This chain is RNA pyrophosphohydrolase, found in Actinobacillus succinogenes (strain ATCC 55618 / DSM 22257 / CCUG 43843 / 130Z).